Reading from the N-terminus, the 327-residue chain is Aquaporin-1 (327 aa).

A disordered region spans residues 1 to 34 (MSSNDSNDTDKQHTRLDPTGVDDAYIPPEQPETK). The Cytoplasmic segment spans residues 1 to 48 (MSSNDSNDTDKQHTRLDPTGVDDAYIPPEQPETKHHRFKISRDTLRNH). Residues 49–69 (FIAAVGEFCGTFMFLWCAYVI) form a helical membrane-spanning segment. The Extracellular portion of the chain corresponds to 70 to 91 (CNVANHDVALVAAPDGSHPGQL). Residues 92-112 (IMIAIGFGFSVMFSIWCFAGV) form a helical membrane-spanning segment. The Cytoplasmic segment spans residues 113–136 (SGGALNPAVSLSLCLARAVSPTRC). The NPA 1 motif lies at 118-120 (NPA). The helical transmembrane segment at 137–157 (VVMWVSQIVAGMAAGGAASAM) threads the bilayer. Over 158-176 (TPGEVLFANSLGLGCSRTR) the chain is Extracellular. The chain crosses the membrane as a helical span at residues 177–197 (GLFLEMFGTAILCLTVLMTAV). Over 198–203 (EKRETN) the chain is Cytoplasmic. The chain crosses the membrane as a helical span at residues 204 to 224 (FMAALPIGISLFIAHVALTAY). The Extracellular segment spans residues 225–248 (TGTGVNPARSLGAAVAARYFPHYH). Positions 230–232 (NPA) match the NPA 2 motif. Residues 249 to 269 (WIYWIGPLLGSILAWSVWQLL) form a helical membrane-spanning segment. Residues 270–327 (QILDYTTYVTAEKAASTKEKAQKKVKPAVPLLWLKSNFPLLFFISRSLALNVIIFGKN) are Cytoplasmic-facing.

It belongs to the MIP/aquaporin (TC 1.A.8) family.

Its subcellular location is the endoplasmic reticulum membrane. The protein resides in the cell membrane. Water channel required to facilitate the transport of water across membranes. Involved in sporulation, freeze tolerance and osmotolerance. Is non-functional in most laboratory strains. This chain is Aquaporin-1 (AQY1), found in Saccharomyces cerevisiae (Baker's yeast).